The primary structure comprises 887 residues: DNA gyrase subunit A (887 aa).

Positions 35 to 501 (LPDVRDGLKP…GFENLEDEDL (467 aa)) constitute a Topo IIA-type catalytic domain. The active-site O-(5'-phospho-DNA)-tyrosine intermediate is tyrosine 123. The GyrA-box signature appears at 528 to 534 (QNRGGRG). Positions 811-864 (KEDAEDETNEDEQSTSTVSEDGTEQQREAVVNDETPGNAIHTEVIDSEENDEDG) are disordered. The segment covering 813-823 (DAEDETNEDEQ) has biased composition (acidic residues).

This sequence belongs to the type II topoisomerase GyrA/ParC subunit family. In terms of assembly, heterotetramer, composed of two GyrA and two GyrB chains. In the heterotetramer, GyrA contains the active site tyrosine that forms a transient covalent intermediate with DNA, while GyrB binds cofactors and catalyzes ATP hydrolysis.

It localises to the cytoplasm. The enzyme catalyses ATP-dependent breakage, passage and rejoining of double-stranded DNA.. A type II topoisomerase that negatively supercoils closed circular double-stranded (ds) DNA in an ATP-dependent manner to modulate DNA topology and maintain chromosomes in an underwound state. Negative supercoiling favors strand separation, and DNA replication, transcription, recombination and repair, all of which involve strand separation. Also able to catalyze the interconversion of other topological isomers of dsDNA rings, including catenanes and knotted rings. Type II topoisomerases break and join 2 DNA strands simultaneously in an ATP-dependent manner. This Staphylococcus aureus (strain COL) protein is DNA gyrase subunit A.